A 402-amino-acid chain; its full sequence is Serine--glyoxylate aminotransferase (402 aa).

The residue at position 201 (lysine 201) is an N6-(pyridoxal phosphate)lysine.

It belongs to the class-V pyridoxal-phosphate-dependent aminotransferase family. It depends on pyridoxal 5'-phosphate as a cofactor.

The enzyme catalyses glyoxylate + L-serine = 3-hydroxypyruvate + glycine. It participates in one-carbon metabolism; formaldehyde assimilation via serine pathway. The sequence is that of Serine--glyoxylate aminotransferase from Methylorubrum extorquens (strain ATCC 14718 / DSM 1338 / JCM 2805 / NCIMB 9133 / AM1) (Methylobacterium extorquens).